Here is a 155-residue protein sequence, read N- to C-terminus: MAEGDITTFNAITESFSLPIGNYKKPKLLYCNNGGYFLRILPEGVVDGTRDRNDLYITLKLSALSQGEVHIKTTETGCYLAMDSSGQLYGTLTPNEECLFLETLEENHYNTYKSKKYADMNWFVGIKKNGASKKGSRTHYGQKAILFLPLPASPD.

Residues Met-1–Ser-15 constitute a propeptide that is removed on maturation. Asn-33 contributes to the heparin binding site. Residues Lys-127–Lys-143 form a heparin-binding region.

The protein belongs to the heparin-binding growth factors family.

It is found in the secreted. The protein resides in the cytoplasm. Its subcellular location is the cell cortex. The protein localises to the cytosol. It localises to the nucleus. In terms of biological role, plays an important role in the regulation of cell survival, cell division, angiogenesis, cell differentiation and cell migration. Functions as a potent mitogen in vitro. Acts as a ligand for FGFR1 and integrins. Binds to FGFR1 in the presence of heparin leading to FGFR1 dimerization and activation via sequential autophosphorylation on tyrosine residues which act as docking sites for interacting proteins, leading to the activation of several signaling cascades. Binds to integrins. Its binding to integrins and subsequent ternary complex formation with integrins and FGFR1 are essential for FGF1 signaling. The sequence is that of Fibroblast growth factor 1 (fgf1) from Xenopus laevis (African clawed frog).